We begin with the raw amino-acid sequence, 597 residues long: Tubulin polyglutamylase ttll-4 (597 aa).

Over residues 1 to 18 (MSSGYSSAPSVSHTSSEA) the composition is skewed to polar residues. Disordered regions lie at residues 1–39 (MSSG…DEQR) and 80–107 (SKSK…FLKS). The span at 26-35 (YEDGVDEEAS) shows a compositional bias: acidic residues. The TTL domain occupies 134 to 472 (QSRLTWCHNS…HVPPSFDKLH (339 aa)). ATP contacts are provided by residues Lys-250, 256-257 (RG), 278-281 (QHYI), and 291-293 (KFD). A protein is bound at residue Arg-256. Residue Arg-317 coordinates L-glutamate. 338–339 (TN) lines the ATP pocket. L-glutamate is bound by residues Tyr-340, Ser-341, and Lys-358. Residues Asp-418, Glu-431, and Asn-433 each coordinate Mg(2+). Lys-449 provides a ligand contact to L-glutamate.

The protein belongs to the tubulin--tyrosine ligase family. Mg(2+) is required as a cofactor.

The catalysed reaction is L-glutamyl-[protein] + L-glutamate + ATP = gamma-L-glutamyl-L-glutamyl-[protein] + ADP + phosphate + H(+). In terms of biological role, monoglutamylase which modifies tubulin, adding a single glutamate on the gamma-carboxyl group of specific glutamate residues of target proteins. Involved in the side-chain initiation step of the polyglutamylation reaction but not in the elongation step. Preferentially modifies beta-tail tubulin over the alpha-tubulin. Involved in side-chain glutamylation of tubulin in sensory cilia. Together with ttll-5 and ttll-11, required for male mating. This is Tubulin polyglutamylase ttll-4 (ttll-4) from Caenorhabditis briggsae.